Consider the following 454-residue polypeptide: Probable ECA polymerase (454 aa).

11 helical membrane-spanning segments follow: residues 6–26 (FSGL…LTWF), 37–57 (VFFS…TSIL), 63–83 (VAVV…CFYA), 122–142 (MMAV…FLLF), 157–177 (GVAL…VYFL), 183–203 (AWLF…MIVG), 209–229 (IIIA…ISPG), 230–250 (MLAA…LKRY), 343–363 (LVVM…GLII), 380–400 (YKAA…IVLA), and 411–431 (VIFF…IYWL).

This sequence belongs to the WzyE family. Probably part of a complex composed of WzxE, WzyE and WzzE.

It localises to the cell inner membrane. Its pathway is bacterial outer membrane biogenesis; enterobacterial common antigen biosynthesis. Functionally, probably involved in the polymerization of enterobacterial common antigen (ECA) trisaccharide repeat units. This chain is Probable ECA polymerase, found in Cronobacter sakazakii (strain ATCC BAA-894) (Enterobacter sakazakii).